Reading from the N-terminus, the 111-residue chain is Universal stress protein B (111 aa).

A run of 2 helical transmembrane segments spans residues 1 to 21 and 90 to 110; these read MISTFALFWALCIVCIINMAR and FLLTTALCGLIVISLIAMMMW.

Belongs to the universal stress protein B family.

It localises to the cell inner membrane. In Pectobacterium atrosepticum (strain SCRI 1043 / ATCC BAA-672) (Erwinia carotovora subsp. atroseptica), this protein is Universal stress protein B.